We begin with the raw amino-acid sequence, 338 residues long: Ketol-acid reductoisomerase (NADP(+)) (338 aa).

Positions 1–181 constitute a KARI N-terminal Rossmann domain; that stretch reads MTVYYDKDCN…GGGRTAIIET (181 aa). NADP(+) contacts are provided by residues 24-27, R47, S52, and 82-85; these read FGSQ and DENQ. Residue H107 is part of the active site. An NADP(+)-binding site is contributed by G133. The KARI C-terminal knotted domain maps to 182 to 327; the sequence is TFKDETETDL…VKLRTMMPWI (146 aa). Residues D190, E194, E226, and E230 each contribute to the Mg(2+) site. Position 251 (S251) interacts with substrate.

Belongs to the ketol-acid reductoisomerase family. It depends on Mg(2+) as a cofactor.

The enzyme catalyses (2R)-2,3-dihydroxy-3-methylbutanoate + NADP(+) = (2S)-2-acetolactate + NADPH + H(+). It carries out the reaction (2R,3R)-2,3-dihydroxy-3-methylpentanoate + NADP(+) = (S)-2-ethyl-2-hydroxy-3-oxobutanoate + NADPH + H(+). Its pathway is amino-acid biosynthesis; L-isoleucine biosynthesis; L-isoleucine from 2-oxobutanoate: step 2/4. It participates in amino-acid biosynthesis; L-valine biosynthesis; L-valine from pyruvate: step 2/4. Its function is as follows. Involved in the biosynthesis of branched-chain amino acids (BCAA). Catalyzes an alkyl-migration followed by a ketol-acid reduction of (S)-2-acetolactate (S2AL) to yield (R)-2,3-dihydroxy-isovalerate. In the isomerase reaction, S2AL is rearranged via a Mg-dependent methyl migration to produce 3-hydroxy-3-methyl-2-ketobutyrate (HMKB). In the reductase reaction, this 2-ketoacid undergoes a metal-dependent reduction by NADPH to yield (R)-2,3-dihydroxy-isovalerate. This chain is Ketol-acid reductoisomerase (NADP(+)), found in Sulfurimonas denitrificans (strain ATCC 33889 / DSM 1251) (Thiomicrospira denitrificans (strain ATCC 33889 / DSM 1251)).